The sequence spans 195 residues: Imidazoleglycerol-phosphate dehydratase (195 aa).

This sequence belongs to the imidazoleglycerol-phosphate dehydratase family.

Its subcellular location is the cytoplasm. It catalyses the reaction D-erythro-1-(imidazol-4-yl)glycerol 3-phosphate = 3-(imidazol-4-yl)-2-oxopropyl phosphate + H2O. The protein operates within amino-acid biosynthesis; L-histidine biosynthesis; L-histidine from 5-phospho-alpha-D-ribose 1-diphosphate: step 6/9. In Burkholderia vietnamiensis (strain G4 / LMG 22486) (Burkholderia cepacia (strain R1808)), this protein is Imidazoleglycerol-phosphate dehydratase.